The following is a 203-amino-acid chain: MNLIPMVVEQTPRGERSYDIYSRLLKERIIFLGSGVNDDVANVIVAQLLFLEAEDPEKDITFYINSPGGSVTAGMAIYDTMQYIKCDIATLCMGQAASMGAVLLAAGTAGKRYALPNSRIMIHQPLGGFQGQATDIEIHTKEILRIRKDLNNILAHHTGKTLKKIESDTERDNFMSSVEAQKYGLIDEVLVKREDVEGAADNG.

S98 acts as the Nucleophile in catalysis. H123 is a catalytic residue.

This sequence belongs to the peptidase S14 family. As to quaternary structure, fourteen ClpP subunits assemble into 2 heptameric rings which stack back to back to give a disk-like structure with a central cavity, resembling the structure of eukaryotic proteasomes.

The protein resides in the cytoplasm. The catalysed reaction is Hydrolysis of proteins to small peptides in the presence of ATP and magnesium. alpha-casein is the usual test substrate. In the absence of ATP, only oligopeptides shorter than five residues are hydrolyzed (such as succinyl-Leu-Tyr-|-NHMec, and Leu-Tyr-Leu-|-Tyr-Trp, in which cleavage of the -Tyr-|-Leu- and -Tyr-|-Trp bonds also occurs).. Functionally, cleaves peptides in various proteins in a process that requires ATP hydrolysis. Has a chymotrypsin-like activity. Plays a major role in the degradation of misfolded proteins. The polypeptide is ATP-dependent Clp protease proteolytic subunit (Desulfotalea psychrophila (strain LSv54 / DSM 12343)).